We begin with the raw amino-acid sequence, 497 residues long: Angiopoietin-1 (497 aa).

Positions 1–19 (MTVFLSFAFLAAILTHIGC) are cleaved as a signal peptide. Residues Asn92, Asn122, Asn154, Asn243, and Asn294 are each glycosylated (N-linked (GlcNAc...) asparagine). Residues 158–256 (RLEIQLLENS…LQKQQLELMD (99 aa)) are a coiled coil. The region spanning 276–496 (KEEEKPFRDC…STTMMIRPLD (221 aa)) is the Fibrinogen C-terminal domain. Disulfide bonds link Cys285/Cys314 and Cys438/Cys451.

Homooligomer. Interacts with TEK/TIE2. Interacts with SVEP1/polydom. Interacts with THBD; this interaction significantly inhibits the generation of activated PC and TAFIa/CPB2 by the thrombin/thrombomodulin complex.

The protein resides in the secreted. In terms of biological role, binds and activates TIE2 receptor by inducing its tyrosine phosphorylation. Implicated in endothelial developmental processes later and distinct from that of VEGF. Appears to play a crucial role in mediating reciprocal interactions between the endothelium and surrounding matrix and mesenchyme. Mediates blood vessel maturation/stability. It may play an important role in the heart early development. In Canis lupus familiaris (Dog), this protein is Angiopoietin-1 (ANGPT1).